The following is a 466-amino-acid chain: Glycylpeptide N-tetradecanoyltransferase (466 aa).

The interval 1–21 (MDNENNKNTKNSQQDSSFSEG) is disordered. A compositionally biased stretch (polar residues) spans 8-19 (NTKNSQQDSSFS). Ser-17 carries the post-translational modification Phosphoserine. Tetradecanoyl-CoA-binding positions include 51–54 (FKFW), 185–187 (LCI), and 193–197 (SKRLT). Catalysis depends on Ile-466, which acts as the Proton acceptor; via carboxylate.

Belongs to the NMT family. In terms of assembly, monomer.

The protein localises to the cytoplasm. It catalyses the reaction N-terminal glycyl-[protein] + tetradecanoyl-CoA = N-tetradecanoylglycyl-[protein] + CoA + H(+). In terms of biological role, adds a myristoyl group to the N-terminal glycine residue of certain cellular proteins. This Schizosaccharomyces pombe (strain 972 / ATCC 24843) (Fission yeast) protein is Glycylpeptide N-tetradecanoyltransferase (nmt1).